We begin with the raw amino-acid sequence, 347 residues long: F-box/kelch-repeat protein At5g03020 (347 aa).

The tract at residues 1 to 21 is disordered; the sequence is MTEEMSKESPPPPPTSFSSLP. The F-box domain occupies 14–62; it reads PTSFSSLPDDVALDCRARISRFHYPTLSLVSKGFRTLIASPELEATRSF. 2 Kelch repeats span residues 119-165 and 167-215; these read QIYI…VIDG and IYVI…KKKH.

This Arabidopsis thaliana (Mouse-ear cress) protein is F-box/kelch-repeat protein At5g03020.